We begin with the raw amino-acid sequence, 181 residues long: Adenine phosphoribosyltransferase (181 aa).

The protein belongs to the purine/pyrimidine phosphoribosyltransferase family. Homodimer.

It localises to the cytoplasm. It carries out the reaction AMP + diphosphate = 5-phospho-alpha-D-ribose 1-diphosphate + adenine. It functions in the pathway purine metabolism; AMP biosynthesis via salvage pathway; AMP from adenine: step 1/1. In terms of biological role, catalyzes a salvage reaction resulting in the formation of AMP, that is energically less costly than de novo synthesis. This Brucella anthropi (strain ATCC 49188 / DSM 6882 / CCUG 24695 / JCM 21032 / LMG 3331 / NBRC 15819 / NCTC 12168 / Alc 37) (Ochrobactrum anthropi) protein is Adenine phosphoribosyltransferase.